Consider the following 99-residue polypeptide: UPF0235 protein HS_1657 (99 aa).

Belongs to the UPF0235 family.

This is UPF0235 protein HS_1657 from Histophilus somni (strain 129Pt) (Haemophilus somnus).